A 471-amino-acid chain; its full sequence is Putative multidrug resistance protein MdtD (471 aa).

At 1-11 (MTDLPDSTRWQ) the chain is on the periplasmic side. The chain crosses the membrane as a helical span at residues 12 to 32 (LWIVAFGFFMQSLDTTIVNTA). Topologically, residues 33–48 (LPSMAQSLGESPLHMH) are cytoplasmic. The helical transmembrane segment at 49–69 (MVIVSYVLTVAVMLPASGWLA) threads the bilayer. Residues 70 to 76 (DKVGVRN) lie on the Periplasmic side of the membrane. The chain crosses the membrane as a helical span at residues 77–97 (IFFTAIVLFTLGSLFCALSGT). Residues 98–101 (LNEL) lie on the Cytoplasmic side of the membrane. Residues 102–124 (LLARALQGVGGAMMVPVGRLTVM) form a helical membrane-spanning segment. Residues 125 to 137 (KIVPREQYMAAMT) lie on the Periplasmic side of the membrane. The chain crosses the membrane as a helical span at residues 138-158 (FVTLPGQIGPLLGPALGGLLV). Residues 159–164 (EYASWH) lie on the Cytoplasmic side of the membrane. A helical membrane pass occupies residues 165-185 (WIFLINIPVGIIGAITTLMLM). Over 186-196 (PNYTMQTRRFD) the chain is Periplasmic. A helical transmembrane segment spans residues 197–217 (LSGFLLLAVGMAVLTLALDGS). At 218 to 224 (KGTGFSP) the chain is on the cytoplasmic side. Residues 225–245 (LAIAGLVAVGVVALVLYLLHA) traverse the membrane as a helical segment. The Periplasmic portion of the chain corresponds to 246 to 262 (QNNNRALFSLKLFRTRT). A helical transmembrane segment spans residues 263–283 (FSLGLAGSFAGRIGSGMLPFM). At 284–285 (TP) the chain is on the cytoplasmic side. The chain crosses the membrane as a helical span at residues 286 to 306 (VFLQIGFGFSPFHAGLMMIPM). Residues 307 to 341 (VLGSMGMKRIVVQVVNRFGYRRVLVATTLGLSLVT) lie on the Periplasmic side of the membrane. Residues 342 to 362 (LLFMTTALLGWYYVLPFVLFL) form a helical membrane-spanning segment. The Cytoplasmic portion of the chain corresponds to 363-395 (QGMVNSTRFSSMNTLTLKDLPDNLASSGNSLLS). Residues 396–416 (MIMQLSMSIGVTIAGLLLGLF) form a helical membrane-spanning segment. At 417 to 430 (GSQHVSVDSGTTQT) the chain is on the periplasmic side. The chain crosses the membrane as a helical span at residues 431 to 451 (VFMYTWLSMASIIALPAFIFA). The Cytoplasmic segment spans residues 452–471 (RVPNDTHQNVAISRRKRSAQ).

Belongs to the major facilitator superfamily. TCR/Tet family.

It is found in the cell inner membrane. This is Putative multidrug resistance protein MdtD from Escherichia coli O6:H1 (strain CFT073 / ATCC 700928 / UPEC).